Reading from the N-terminus, the 261-residue chain is Precorrin-6A synthase [deacetylating] (261 aa).

The enzyme catalyses precorrin-5 + S-adenosyl-L-methionine + H2O = precorrin-6A + acetate + S-adenosyl-L-homocysteine + 2 H(+). It participates in cofactor biosynthesis; adenosylcobalamin biosynthesis; cob(II)yrinate a,c-diamide from precorrin-2 (aerobic route): step 5/10. In terms of biological role, catalyzes the methylation of C-1 in precorrin-5 and the subsequent extrusion of acetic acid from the resulting intermediate to form cobalt-precorrin-6A. In Sinorhizobium sp, this protein is Precorrin-6A synthase [deacetylating] (cobF).